A 192-amino-acid polypeptide reads, in one-letter code: Early nodulin-like protein 7 (192 aa).

The N-terminal stretch at methionine 1–alanine 27 is a signal peptide. One can recognise a Phytocyanin domain in the interval arginine 32 to histidine 134. Asparagine 48, asparagine 89, and asparagine 101 each carry an N-linked (GlcNAc...) asparagine glycan. Cysteine 88 and cysteine 122 are oxidised to a cystine. A lipid anchor (GPI-anchor amidated serine) is attached at serine 166. A propeptide spans alanine 167–tyrosine 192 (removed in mature form).

The protein belongs to the early nodulin-like (ENODL) family. In terms of tissue distribution, mostly expressed in flowers, and, to a lower extent, in seeds, but barely in seedlings, stems, leaves and roots.

It localises to the cell membrane. In terms of biological role, may act as a carbohydrate transporter. In Arabidopsis thaliana (Mouse-ear cress), this protein is Early nodulin-like protein 7.